Reading from the N-terminus, the 187-residue chain is Adenylate kinase (187 aa).

Position 10-15 (10-15 (GSGKGT)) interacts with ATP. The interval 30 to 59 (STGDMLRAEIAAGTELGKQAKTVMDAGNLV) is NMP. AMP-binding positions include Thr31, Arg36, 57–59 (NLV), 85–88 (GYPR), and Gln92. The tract at residues 126–136 (GRAKEQGRADD) is LID. Arg127 contributes to the ATP binding site. Positions 133 and 144 each coordinate AMP. Gly172 contacts ATP.

This sequence belongs to the adenylate kinase family. In terms of assembly, monomer.

It localises to the cytoplasm. It catalyses the reaction AMP + ATP = 2 ADP. It functions in the pathway purine metabolism; AMP biosynthesis via salvage pathway; AMP from ADP: step 1/1. Its function is as follows. Catalyzes the reversible transfer of the terminal phosphate group between ATP and AMP. Plays an important role in cellular energy homeostasis and in adenine nucleotide metabolism. The chain is Adenylate kinase from Stenotrophomonas maltophilia (strain K279a).